The chain runs to 142 residues: Large ribosomal subunit protein uL13 (142 aa).

Belongs to the universal ribosomal protein uL13 family. In terms of assembly, part of the 50S ribosomal subunit.

In terms of biological role, this protein is one of the early assembly proteins of the 50S ribosomal subunit, although it is not seen to bind rRNA by itself. It is important during the early stages of 50S assembly. In Pseudomonas fluorescens (strain Pf0-1), this protein is Large ribosomal subunit protein uL13.